Consider the following 75-residue polypeptide: Translational regulator CsrA (75 aa).

It belongs to the CsrA/RsmA family. In terms of assembly, homodimer; the beta-strands of each monomer intercalate to form a hydrophobic core, while the alpha-helices form wings that extend away from the core.

The protein localises to the cytoplasm. Functionally, a translational regulator that binds mRNA to regulate translation initiation and/or mRNA stability. Usually binds in the 5'-UTR at or near the Shine-Dalgarno sequence preventing ribosome-binding, thus repressing translation. Its main target seems to be the major flagellin gene, while its function is anatagonized by FliW. This Alkaliphilus metalliredigens (strain QYMF) protein is Translational regulator CsrA.